Consider the following 1894-residue polypeptide: 1,3-beta-glucan synthase component bgs2 (1894 aa).

2 disordered regions span residues 1–53 (MSWH…DSNK) and 282–310 (GPKI…PETS). The span at 32–51 (EFNNPGEESTYPQANSWNDS) shows a compositional bias: polar residues. The segment covering 286-296 (KQAKKKQKRKS) has biased composition (basic residues). Transmembrane regions (helical) follow at residues 530–550 (VSLG…FEWI), 566–586 (FLIL…VFGF), 600–620 (VAIV…LVPL), 655–675 (VSWG…YFFL), 710–730 (ILLG…TYLW), 731–751 (YILV…ISIW), 1338–1358 (IFIM…GGMY), 1394–1414 (CIIS…VQEL), 1476–1498 (LLFS…MLLF), 1503–1525 (VWIP…PFIF), 1598–1618 (FTEI…YFFI), 1637–1657 (ILIL…TFAG), 1673–1693 (FGAV…IIVF), 1697–1717 (WYLE…IIAI), 1778–1798 (DFFL…IPFI), and 1837–1857 (TMFF…LVVA).

It belongs to the glycosyltransferase 48 family. In terms of assembly, component of the 1,3-beta-glucan synthase (GS) complex, composed of at least the alternate catalytic subunits bgs1, bgs2, bgs3, and bgs4, and a regulatory subunit chr4.

It is found in the prospore membrane. It catalyses the reaction [(1-&gt;3)-beta-D-glucosyl](n) + UDP-alpha-D-glucose = [(1-&gt;3)-beta-D-glucosyl](n+1) + UDP + H(+). Functionally, alternate catalytic subunit of the 1,3-beta-glucan synthase (GS) complex. Synthesizes 1,3-beta-glucan, a major structural component of the yeast cell wall. Has a role in ascospore development where it is required for the assembly of a functional spore wall. This chain is 1,3-beta-glucan synthase component bgs2, found in Schizosaccharomyces pombe (strain 972 / ATCC 24843) (Fission yeast).